A 47-amino-acid chain; its full sequence is Large ribosomal subunit protein eL40 (47 aa).

This sequence belongs to the eukaryotic ribosomal protein eL40 family.

The polypeptide is Large ribosomal subunit protein eL40 (Methanocaldococcus jannaschii (strain ATCC 43067 / DSM 2661 / JAL-1 / JCM 10045 / NBRC 100440) (Methanococcus jannaschii)).